The sequence spans 706 residues: Elongation factor G (706 aa).

A tr-type G domain is found at Leu-15–Val-291. GTP-binding positions include Ala-24–Thr-31, Asp-91–His-95, and Asn-145–Asp-148.

This sequence belongs to the TRAFAC class translation factor GTPase superfamily. Classic translation factor GTPase family. EF-G/EF-2 subfamily.

It localises to the cytoplasm. Functionally, catalyzes the GTP-dependent ribosomal translocation step during translation elongation. During this step, the ribosome changes from the pre-translocational (PRE) to the post-translocational (POST) state as the newly formed A-site-bound peptidyl-tRNA and P-site-bound deacylated tRNA move to the P and E sites, respectively. Catalyzes the coordinated movement of the two tRNA molecules, the mRNA and conformational changes in the ribosome. In Leptospira borgpetersenii serovar Hardjo-bovis (strain L550), this protein is Elongation factor G.